The following is a 146-amino-acid chain: Large ribosomal subunit protein uL22 (146 aa).

The segment at 1–39 is disordered; the sequence is MAETQTTTPKKKAERRAPPPARARKNRPAAPAPGPHASL.

Belongs to the universal ribosomal protein uL22 family. Part of the 50S ribosomal subunit.

Its function is as follows. This protein binds specifically to 23S rRNA; its binding is stimulated by other ribosomal proteins, e.g. L4, L17, and L20. It is important during the early stages of 50S assembly. It makes multiple contacts with different domains of the 23S rRNA in the assembled 50S subunit and ribosome. The globular domain of the protein is located near the polypeptide exit tunnel on the outside of the subunit, while an extended beta-hairpin is found that lines the wall of the exit tunnel in the center of the 70S ribosome. In Anaeromyxobacter dehalogenans (strain 2CP-1 / ATCC BAA-258), this protein is Large ribosomal subunit protein uL22.